A 345-amino-acid polypeptide reads, in one-letter code: Phosphoribosylformylglycinamidine cyclo-ligase (345 aa).

The protein belongs to the AIR synthase family.

The protein resides in the cytoplasm. It catalyses the reaction 2-formamido-N(1)-(5-O-phospho-beta-D-ribosyl)acetamidine + ATP = 5-amino-1-(5-phospho-beta-D-ribosyl)imidazole + ADP + phosphate + H(+). Its pathway is purine metabolism; IMP biosynthesis via de novo pathway; 5-amino-1-(5-phospho-D-ribosyl)imidazole from N(2)-formyl-N(1)-(5-phospho-D-ribosyl)glycinamide: step 2/2. This Shewanella denitrificans (strain OS217 / ATCC BAA-1090 / DSM 15013) protein is Phosphoribosylformylglycinamidine cyclo-ligase.